A 439-amino-acid polypeptide reads, in one-letter code: Acyl transferase 7 (439 aa).

Positions 1–25 (MAAAAPDKAVERLSQKLVHPSSPTP) are disordered. Residues histidine 176 and aspartate 383 each act as proton acceptor in the active site.

This sequence belongs to the plant acyltransferase family.

In terms of biological role, involved in the incorporation of ferulate into the cell wall. May act as arabinoxylan feruloyl transferase. This is Acyl transferase 7 from Oryza sativa subsp. japonica (Rice).